We begin with the raw amino-acid sequence, 292 residues long: Expansin-B11 (292 aa).

The signal sequence occupies residues 1 to 27 (MAKSCTLVLLLVALVGLSLLVSPIACS). Residue Asn51 is glycosylated (N-linked (GlcNAc...) asparagine). The Expansin-like EG45 domain occupies 82–192 (GGACGYQTAV…RRVPCKYSGV (111 aa)). Intrachain disulfides connect Cys85/Cys114, Cys117/Cys187, and Cys122/Cys128. The 83-residue stretch at 205-287 (FYFEVLIEFE…SWKPGVTYRS (83 aa)) folds into the Expansin-like CBD domain.

The protein belongs to the expansin family. Expansin B subfamily. As to expression, expressed in internodes.

The protein localises to the secreted. It is found in the cell wall. The protein resides in the membrane. In terms of biological role, may cause loosening and extension of plant cell walls by disrupting non-covalent bonding between cellulose microfibrils and matrix glucans. No enzymatic activity has been found. May be required for rapid internodal elongation in deepwater rice during submergence. This Oryza sativa subsp. japonica (Rice) protein is Expansin-B11 (EXPB11).